Consider the following 217-residue polypeptide: MAQKDHPNGPKKSASASSKRWMYEHVNDFYVKEATKKGLRSRAVFKLEEINKKDKLIRSGMTVVDLGAAPGSWSQWAVDTVGLKGKVIACDILPMDSIAGVDFLQGDFREDAVVNALLARIAGHKVDVVLSDMSPNMTGTVGIDQPKSMYLVELALEMCKEVLVKEGSFVVKVFMGSEFDLFMSEARKCFKSVKTRKPDSSRSRSREVYVVATGYKG.

S-adenosyl-L-methionine contacts are provided by glycine 71, tryptophan 73, aspartate 91, aspartate 107, and aspartate 132. The Proton acceptor role is filled by lysine 172.

The protein belongs to the class I-like SAM-binding methyltransferase superfamily. RNA methyltransferase RlmE family.

Its subcellular location is the cytoplasm. It catalyses the reaction uridine(2552) in 23S rRNA + S-adenosyl-L-methionine = 2'-O-methyluridine(2552) in 23S rRNA + S-adenosyl-L-homocysteine + H(+). In terms of biological role, specifically methylates the uridine in position 2552 of 23S rRNA at the 2'-O position of the ribose in the fully assembled 50S ribosomal subunit. This Psychromonas ingrahamii (strain DSM 17664 / CCUG 51855 / 37) protein is Ribosomal RNA large subunit methyltransferase E.